A 459-amino-acid polypeptide reads, in one-letter code: MIVTRFAPSPTGYLHIGGLRTALYNYLYARANNGKFLLRIEDTDLKRNSEEATQAIKEAFAWCKLDHDGEVTYQSKRFDLYKEYVKKLLDEGKAYKCYMSKEELEELRASQEARKERPKYDNRYRDFTGTPPAGIEPVIRIKAPLSGEIVIHDGIKGEVKFKVEDILDDFIIARSDGTPTYNFTVVIDDALMGVTDVIRGDDHLSNTPKQIVLYEALGFKVPKFYHVAMINGEDGKKLSKRHGATDVMEYKKMGYLPEALLNFLVRLGWSHGDDEIFTIEDMLKYFNPNDINKSSSTYNAQKLDWLNSHYIKTLPYERLAHDMLEFGVDFKALVKGELLLNSLRERSKTLIEMANSANAIINAPKSYDEKAWAKFINENSKEILAKFAQILDRDLDAKGYEELTNKFLEQNGLKLKDLAQALRIALTGSSVSPSIFEVLEVVGSNEIKNRIQNLLKEEK.

The 'HIGH' region signature appears at 8-18 (PSPTGYLHIGG). The 'KMSKS' region motif lies at 237-241 (KLSKR). K240 serves as a coordination point for ATP.

This sequence belongs to the class-I aminoacyl-tRNA synthetase family. Glutamate--tRNA ligase type 1 subfamily. In terms of assembly, monomer.

The protein localises to the cytoplasm. It catalyses the reaction tRNA(Glu) + L-glutamate + ATP = L-glutamyl-tRNA(Glu) + AMP + diphosphate. In terms of biological role, catalyzes the attachment of glutamate to tRNA(Glu) in a two-step reaction: glutamate is first activated by ATP to form Glu-AMP and then transferred to the acceptor end of tRNA(Glu). The chain is Glutamate--tRNA ligase 2 from Campylobacter concisus (strain 13826).